Here is a 98-residue protein sequence, read N- to C-terminus: NADH-ubiquinone oxidoreductase chain 4L (98 aa).

3 consecutive transmembrane segments (helical) span residues 1–21, 29–49, and 61–81; these read MSMV…GLLM, SLLC…VTIL, and IILL…LVMV.

This sequence belongs to the complex I subunit 4L family. Core subunit of respiratory chain NADH dehydrogenase (Complex I) which is composed of 45 different subunits.

Its subcellular location is the mitochondrion inner membrane. The enzyme catalyses a ubiquinone + NADH + 5 H(+)(in) = a ubiquinol + NAD(+) + 4 H(+)(out). Its function is as follows. Core subunit of the mitochondrial membrane respiratory chain NADH dehydrogenase (Complex I) which catalyzes electron transfer from NADH through the respiratory chain, using ubiquinone as an electron acceptor. Part of the enzyme membrane arm which is embedded in the lipid bilayer and involved in proton translocation. The chain is NADH-ubiquinone oxidoreductase chain 4L (MT-ND4L) from Erignathus barbatus (Bearded seal).